We begin with the raw amino-acid sequence, 116 residues long: Nucleoid-associated protein A9601_00191 (116 aa).

The protein belongs to the YbaB/EbfC family. In terms of assembly, homodimer.

The protein localises to the cytoplasm. The protein resides in the nucleoid. In terms of biological role, binds to DNA and alters its conformation. May be involved in regulation of gene expression, nucleoid organization and DNA protection. The sequence is that of Nucleoid-associated protein A9601_00191 from Prochlorococcus marinus (strain AS9601).